A 476-amino-acid polypeptide reads, in one-letter code: Sensor protein CzcS (476 aa).

The first 35 residues, 1 to 35 (MRPGTSITPLSLTRRLGLFFALVLSIALASMGAFA), serve as a signal peptide directing secretion. The Periplasmic segment spans residues 37-158 (YSLAAQLEAR…DRKQVTARFR (122 aa)). The helical transmembrane segment at 159–179 (TTLVLGTTVGVILTALVGAAI) threads the bilayer. The Cytoplasmic segment spans residues 180–476 (TRRELEPAHV…RPSQDRPVVG (297 aa)). Positions 181–234 (RRELEPAHVLIKQINRISVERLSYRVDMPPKPTEVRDIASAFNAMLQRLEDGYQ) constitute an HAMP domain. Residues 242–455 (DLAHDLRTPL…TRFTLRFPLN (214 aa)) enclose the Histidine kinase domain. Phosphohistidine; by autocatalysis is present on histidine 245.

The protein localises to the cell inner membrane. The catalysed reaction is ATP + protein L-histidine = ADP + protein N-phospho-L-histidine.. Member of the two-component regulatory system CzcS/CzcR involved in the control of cobalt, zinc and cadmium homeostasis. Probably activates CzcR by phosphorylation. The sequence is that of Sensor protein CzcS (czcS) from Cupriavidus metallidurans (strain ATCC 43123 / DSM 2839 / NBRC 102507 / CH34) (Ralstonia metallidurans).